Consider the following 798-residue polypeptide: Integrin beta-1-A (798 aa).

A signal peptide spans 1 to 21 (MAHYPVFTVGLLTCLVLCINA). Residues 22-727 (QQGGTECLKA…VKEPECPSGP (706 aa)) lie on the Extracellular side of the membrane. Positions 27–77 (ECLKANAKSCGECIQAGPNCGWCTKVDFLQEGEPTSARCDDLAALKSKGCP) constitute a PSI domain. 28 disulfide bridges follow: Cys28-Cys46, Cys36-Cys464, Cys39-Cys65, Cys49-Cys76, Cys206-Cys212, Cys260-Cys300, Cys400-Cys414, Cys434-Cys462, Cys466-Cys486, Cys477-Cys489, Cys491-Cys500, Cys502-Cys533, Cys516-Cys531, Cys525-Cys536, Cys538-Cys553, Cys555-Cys576, Cys560-Cys574, Cys568-Cys579, Cys581-Cys590, Cys592-Cys615, Cys599-Cys613, Cys607-Cys618, Cys620-Cys630, Cys633-Cys636, Cys640-Cys691, Cys646-Cys665, Cys649-Cys661, and Cys699-Cys723. Residues 76–106 (CPEDDIQNPRGRKQKLKDIPITSKGKGERMD) are disordered. N-linked (GlcNAc...) asparagine glycosylation is found at Asn109 and Asn131. In terms of domain architecture, VWFA spans 139–377 (DYPIDLYYLM…QLIIDSYNSL (239 aa)). Ser151 and Ser153 together coordinate Mg(2+). 4 residues coordinate Ca(2+): Ser153, Asp156, Asp157, and Glu188. 2 N-linked (GlcNAc...) asparagine glycosylation sites follow: Asn211 and Asn223. Residues Asn243, Asp245, Pro247, and Glu248 each contribute to the Ca(2+) site. Glu248 contacts Mg(2+). 2 N-linked (GlcNAc...) asparagine glycosylation sites follow: Asn268 and Asn362. The N-linked (GlcNAc...) asparagine glycan is linked to Asn416. I-EGF domains are found at residues 466 to 501 (CQDK…KECE), 502 to 554 (CSTD…KYCE), 555 to 591 (CDNF…SACD), and 592 to 631 (CSED…PTCE). Asn481 carries an N-linked (GlcNAc...) asparagine glycan. Asn520 carries an N-linked (GlcNAc...) asparagine glycan. Asn584 carries an N-linked (GlcNAc...) asparagine glycan. An N-linked (GlcNAc...) asparagine glycan is attached at Asn669. A helical transmembrane segment spans residues 728-751 (DIIPIVAGVVAGIVLIGLALLLIW). At 752 to 798 (KLLMIIHDRREFAKFEKEKMNAKWDTGENPIYKSAVTTVVNPKYEGK) the chain is on the cytoplasmic side. Phosphotyrosine is present on Tyr783.

Belongs to the integrin beta chain family. Heterodimer of an alpha and a beta subunit.

It is found in the cell membrane. The protein resides in the cell projection. It localises to the invadopodium membrane. The protein localises to the ruffle membrane. Its subcellular location is the melanosome. It is found in the cleavage furrow. The protein resides in the lamellipodium. It localises to the ruffle. Beta integrins associate with alpha subunits to form receptor complexes that recognize the sequence R-G-D in a wide array of ligands. May be involved in osteoblast compaction. May play role in myoblast differentiation and fusion during skeletal myogenesis. This chain is Integrin beta-1-A (itgb1-a), found in Xenopus laevis (African clawed frog).